The chain runs to 368 residues: Chaperone protein DnaJ (368 aa).

In terms of domain architecture, J spans 5–65; the sequence is DYYEVLGLTK…QKKARYDQFG (61 aa). The CR-type zinc-finger motif lies at 125-207; sequence GKETEIEIPK…CRGEGKVQKR (83 aa). Residues C138, C141, C155, C158, C181, C184, C195, and C198 each coordinate Zn(2+). CXXCXGXG motif repeat units lie at residues 138-145, 155-162, 181-188, and 195-202; these read CETCHGSG, CSTCNGAG, CTTCHGTG, and CSTCRGEG.

Belongs to the DnaJ family. In terms of assembly, homodimer. Requires Zn(2+) as cofactor.

Its subcellular location is the cytoplasm. Participates actively in the response to hyperosmotic and heat shock by preventing the aggregation of stress-denatured proteins and by disaggregating proteins, also in an autonomous, DnaK-independent fashion. Unfolded proteins bind initially to DnaJ; upon interaction with the DnaJ-bound protein, DnaK hydrolyzes its bound ATP, resulting in the formation of a stable complex. GrpE releases ADP from DnaK; ATP binding to DnaK triggers the release of the substrate protein, thus completing the reaction cycle. Several rounds of ATP-dependent interactions between DnaJ, DnaK and GrpE are required for fully efficient folding. Also involved, together with DnaK and GrpE, in the DNA replication of plasmids through activation of initiation proteins. This is Chaperone protein DnaJ from Lysinibacillus sphaericus (Bacillus sphaericus).